Consider the following 361-residue polypeptide: dTDP-glucose 4,6-dehydratase (361 aa).

Residues F11–I12, D32–T35, D58–I59, L80–S84, and T99 each bind NAD(+). S84 is a binding site for substrate. Position 133 (T133) interacts with substrate. The active-site Proton donor is the D134. Catalysis depends on proton acceptor residues E135 and Y167. Position 167–171 (Y167–K171) interacts with NAD(+). N196 serves as a coordination point for substrate. N197 is a binding site for NAD(+). Residues K206 to L207, P222 to Y224, R231, N266, and D296 to H300 each bind substrate.

Belongs to the NAD(P)-dependent epimerase/dehydratase family. dTDP-glucose dehydratase subfamily. As to quaternary structure, homodimer. It depends on NAD(+) as a cofactor.

It carries out the reaction dTDP-alpha-D-glucose = dTDP-4-dehydro-6-deoxy-alpha-D-glucose + H2O. It functions in the pathway carbohydrate biosynthesis; dTDP-L-rhamnose biosynthesis. The protein operates within bacterial outer membrane biogenesis; LPS O-antigen biosynthesis. Catalyzes the dehydration of dTDP-D-glucose to form dTDP-6-deoxy-D-xylo-4-hexulose via a three-step process involving oxidation, dehydration and reduction. In Shigella flexneri, this protein is dTDP-glucose 4,6-dehydratase (rfbB).